Reading from the N-terminus, the 96-residue chain is Probable quinol oxidase subunit 4 (96 aa).

The next 3 membrane-spanning stretches (helical) occupy residues 8-28 (TVGFIASIVLTLLAVFVTLYT), 36-56 (VTIIFGFAFIQAALQLLMFMH), and 68-88 (FKVIFAIIITLVTVIGTYWVM).

This sequence belongs to the cytochrome c oxidase bacterial subunit 4 family.

It localises to the cell membrane. The enzyme catalyses 2 a quinol + O2 = 2 a quinone + 2 H2O. Its function is as follows. Catalyzes quinol oxidation with the concomitant reduction of oxygen to water. The polypeptide is Probable quinol oxidase subunit 4 (qoxD) (Staphylococcus epidermidis (strain ATCC 35984 / DSM 28319 / BCRC 17069 / CCUG 31568 / BM 3577 / RP62A)).